The chain runs to 455 residues: Protein YmfN (455 aa).

The protein belongs to the phage terminase family.

This Escherichia coli (strain K12) protein is Protein YmfN (ymfN).